Here is a 174-residue protein sequence, read N- to C-terminus: RNA pyrophosphohydrolase (174 aa).

The region spanning 14–167 is the Nudix hydrolase domain; the sequence is PYRPCVGLMV…KRKVYEEVVA (154 aa). The short motif at 55–76 is the Nudix box element; it reads GGIDKGEEPLEAAIRELYEETG.

The protein belongs to the Nudix hydrolase family. RppH subfamily. It depends on a divalent metal cation as a cofactor.

Functionally, accelerates the degradation of transcripts by removing pyrophosphate from the 5'-end of triphosphorylated RNA, leading to a more labile monophosphorylated state that can stimulate subsequent ribonuclease cleavage. The sequence is that of RNA pyrophosphohydrolase from Brucella anthropi (strain ATCC 49188 / DSM 6882 / CCUG 24695 / JCM 21032 / LMG 3331 / NBRC 15819 / NCTC 12168 / Alc 37) (Ochrobactrum anthropi).